Consider the following 299-residue polypeptide: Kruppel-like factor 2 (299 aa).

Disordered stretches follow at residues 19 to 38 (YQNA…SHHH) and 146 to 189 (YSFS…RRDK). The segment covering 23–38 (HHQHHQQHYHQQSHHH) has biased composition (basic residues). The segment covering 153-180 (SGKDEEDPRIPLKDRGRVYHPQSTEKPK) has biased composition (basic and acidic residues). 3 consecutive C2H2-type zinc fingers follow at residues 198–222 (HKCF…ERVH), 228–252 (YPCE…YRKH), and 258–280 (FACK…MKRH).

Belongs to the krueppel C2H2-type zinc-finger protein family. Expressed predominantly in intestine.

Its subcellular location is the nucleus. Probable transcription factor which regulates lipid metabolism. The sequence is that of Kruppel-like factor 2 from Caenorhabditis elegans.